The following is a 129-amino-acid chain: DNA-directed RNA polymerase II subunit RPB9 (129 aa).

Zn(2+) is bound by residues Cys21, Cys24, Cys43, Cys46, Cys90, Cys93, Cys118, and Cys123. The C4-type zinc-finger motif lies at 21 to 46 (CQECNNMLYPKEDKENKILLYACRNC). Residues 86 to 128 (EDHACPKCSHREAVFFQAQTRRAEEEMRLYYVCTNQNCTHRWT) form a TFIIS-type zinc finger.

This sequence belongs to the archaeal RpoM/eukaryotic RPA12/RPB9/RPC11 RNA polymerase family. As to quaternary structure, component of the RNA polymerase II (Pol II) complex consisting of 12 subunits.

The protein resides in the nucleus. The protein localises to the nucleolus. Its function is as follows. DNA-dependent RNA polymerase catalyzes the transcription of DNA into RNA using the four ribonucleoside triphosphates as substrates. Component of RNA polymerase II which synthesizes mRNA precursors and many functional non-coding RNAs. Pol II is the central component of the basal RNA polymerase II transcription machinery. It is composed of mobile elements that move relative to each other. RPB9 is part of the upper jaw surrounding the central large cleft and thought to grab the incoming DNA template. This chain is DNA-directed RNA polymerase II subunit RPB9, found in Drosophila melanogaster (Fruit fly).